The primary structure comprises 398 residues: MSKTIAINAGSSSLKWQLYQMPEEAVLAQGIIERIGLKDSISTVKYDGKKEEQILDIHDHTEAVKILLNDLIHFGIIAAYDEITGVGHRVVAGGELFKESVVVNDKVLEHIEELSVLAPLHNPGAAAGIRAFRDILPDITSVCVFDTSFHTSMAKHTYLYPIPQKYYTDYKVRKYGAHGTSHKYVAQEAAKMLGRPLEELKLITAHIGNGVSITANYHGKSVDTSMGFTPLAGPMMGTRSGDIDPAIIPYLIEQDPELKDAADVVNMLNKKSGLSGVSGISSDMRDIEAGLQEDNPDAVLAYNIFIDRIKKCIGQYFAVLNGADALVFTAGMGENAPLMRQDVIGGLTWFGMDIDPEKNVFGYRGDISTPESKVKVLVISTDEELCIARDVERLKNTK.

Residue N8 participates in Mg(2+) binding. K15 is an ATP binding site. R89 serves as a coordination point for substrate. D146 (proton donor/acceptor) is an active-site residue. ATP is bound by residues 206-210, 283-285, and 331-335; these read HIGNG, DMR, and GMGEN. E383 provides a ligand contact to Mg(2+).

This sequence belongs to the acetokinase family. Homodimer. It depends on Mg(2+) as a cofactor. Mn(2+) is required as a cofactor.

The protein localises to the cytoplasm. The catalysed reaction is acetate + ATP = acetyl phosphate + ADP. It functions in the pathway metabolic intermediate biosynthesis; acetyl-CoA biosynthesis; acetyl-CoA from acetate: step 1/2. Catalyzes the formation of acetyl phosphate from acetate and ATP. Can also catalyze the reverse reaction. The chain is Acetate kinase from Streptococcus pyogenes serotype M2 (strain MGAS10270).